Consider the following 37-residue polypeptide: Lambda-hexatoxin-Hv1c (37 aa).

4 disulfides stabilise this stretch: C3/C17, C10/C22, C13/C14, and C16/C32.

It belongs to the neurotoxin 11 (kappa toxin) family. As to expression, expressed by the venom gland.

It is found in the secreted. Functionally, this excitatory toxin inhibits insect calcium-activated potassium (KCa) channels (Slo-type). Pan-neuronal expression in Drosophila is lethal but flies engineered to express the toxin only in clock neurons have defects in circadian rhythm but a normal lifespan. This Hadronyche versuta (Blue mountains funnel-web spider) protein is Lambda-hexatoxin-Hv1c.